A 306-amino-acid chain; its full sequence is Aspartate carbamoyltransferase catalytic subunit (306 aa).

The carbamoyl phosphate site is built by R55 and T56. K84 is an L-aspartate binding site. Residues R105, H133, and Q136 each coordinate carbamoyl phosphate. 2 residues coordinate L-aspartate: R166 and R227. L265 and P266 together coordinate carbamoyl phosphate.

The protein belongs to the aspartate/ornithine carbamoyltransferase superfamily. ATCase family. As to quaternary structure, heterododecamer (2C3:3R2) of six catalytic PyrB chains organized as two trimers (C3), and six regulatory PyrI chains organized as three dimers (R2).

The enzyme catalyses carbamoyl phosphate + L-aspartate = N-carbamoyl-L-aspartate + phosphate + H(+). The protein operates within pyrimidine metabolism; UMP biosynthesis via de novo pathway; (S)-dihydroorotate from bicarbonate: step 2/3. Catalyzes the condensation of carbamoyl phosphate and aspartate to form carbamoyl aspartate and inorganic phosphate, the committed step in the de novo pyrimidine nucleotide biosynthesis pathway. This Neisseria gonorrhoeae (strain ATCC 700825 / FA 1090) protein is Aspartate carbamoyltransferase catalytic subunit.